Reading from the N-terminus, the 518-residue chain is Fusicoccin H C-9 hydroxylase (518 aa).

The helical transmembrane segment at 12–29 threads the bilayer; it reads HLLLISTVIAVLAALIVS. N-linked (GlcNAc...) asparagine glycans are attached at residues asparagine 81 and asparagine 168. Residue cysteine 456 coordinates heme.

The protein belongs to the cytochrome P450 family. Requires heme as cofactor.

Its subcellular location is the membrane. The protein operates within mycotoxin biosynthesis. Functionally, cytochrome P450 monooxygenase; part of the 2 gene clusters that mediate the biosynthesis of fusicoccins, diterpene glucosides that display phytohormone-like activity and function as potent activators of plasma membrane H(+)-ATPases in plants by modifying 14-3-3 proteins and cause the plant disease constriction canker. The first step in the pathway is performed by the fusicoccadiene synthase PaFS that possesses both prenyl transferase and terpene cyclase activity, converting isopentenyl diphosphate and dimethylallyl diphosphate into geranylgeranyl diphosphate (GGDP) and successively converting GGDP into fusicocca-2,10(14)-diene, a precursor for fusicoccin H. The second step is the oxidation at the C-8 position by the cytochrome P450 monooxygenase PaP450-2 to yield fusicocca-2,10(14)-diene-8-beta-ol. The cytochrome P450 monooxygenase PaP450-1 then catalyzes the hydroxylation at the C-16 position to produce fusicocca-2,10(14)-diene-8-beta,16-diol. The dioxygenase fc-dox then catalyzes the 16-oxydation of fusicocca-2,10(14)-diene-8-beta,16-diol to yield an aldehyde (8-beta-hydroxyfusicocca-1,10(14)-dien-16-al). The short-chain dehydrogenase/reductase fc-sdr catalyzes the reduction of the aldehyde to yield fusicocca-1,10(14)-diene-8-beta,16-diol. The next step is the hydroxylation at C-9 performed by the cytochrome P450 monooxygenase PaP450-3 that leads to fusicoccin H aglycon which is glycosylated to fusicoccin H by the O-glycosyltransferase PaGT. Hydroxylation at C-12 by the cytochrome P450 monooxygenase PaP450-4 leads then to the production of fusicoccin Q and is followed by methylation by the O-methyltransferase PaMT to yield fusicoccin P. Fusicoccin P is further converted to fusicoccin J via prenylation by the O-glucose prenyltransferase PaPT. Cytochrome P450 monooxygenase PaP450-5 then performs hydroxylation at C-19 to yield dideacetyl-fusicoccin A which is acetylated to 3'-O-deacetyl-fusicoccin A by the O-acetyltransferase PaAT-2. Finally, a another acetylation by the O-acetyltransferase PaAT-1 yields fusicoccin A. The protein is Fusicoccin H C-9 hydroxylase of Phomopsis amygdali (Fusicoccum amygdali).